A 46-amino-acid polypeptide reads, in one-letter code: Cuticle protein 4.9 (46 aa).

In terms of biological role, component of the cuticle of migratory locust which contains more than 100 different structural proteins. The protein is Cuticle protein 4.9 of Locusta migratoria (Migratory locust).